The primary structure comprises 186 residues: GTP cyclohydrolase 1 1 (186 aa).

Belongs to the GTP cyclohydrolase I family. As to quaternary structure, homomer.

The catalysed reaction is GTP + H2O = 7,8-dihydroneopterin 3'-triphosphate + formate + H(+). It participates in cofactor biosynthesis; 7,8-dihydroneopterin triphosphate biosynthesis; 7,8-dihydroneopterin triphosphate from GTP: step 1/1. This chain is GTP cyclohydrolase 1 1 (folE1), found in Pseudomonas aeruginosa (strain ATCC 15692 / DSM 22644 / CIP 104116 / JCM 14847 / LMG 12228 / 1C / PRS 101 / PAO1).